We begin with the raw amino-acid sequence, 360 residues long: Alpha-ketoglutarate dependent kainoid synthase (360 aa).

The Fe2OG dioxygenase domain occupies 200–310 (MFFSNRIYPE…RASLISFYEP (111 aa)). Positions 225, 227, and 286 each coordinate Fe cation. Arg-301 is a binding site for 2-oxoglutarate.

It belongs to the iron/ascorbate-dependent oxidoreductase family. The cofactor is Fe(2+).

It carries out the reaction prekainate + 2-oxoglutarate + O2 = kainate + succinate + CO2 + H2O. The enzyme catalyses prekainate + 2-oxoglutarate + O2 + H(+) = kainate lactone + succinate + CO2 + H2O. Its pathway is secondary metabolite biosynthesis. Its activity is regulated as follows. Inhibited by the iron chelator EDTA. In terms of biological role, iron/ascorbate-dependent oxidoreductase: part of the gene cluster that mediates the biosynthesis of kainic acid (KA) and derivatives, natural products with neurochemical activity acting as ionotropic glutamate receptor (iGluR) agonists, thus being neurotoxins. Catalyzes the conversion of prekainic acid to kainic acid and kainic acid lactone. The chain is Alpha-ketoglutarate dependent kainoid synthase from Digenea simplex (Marine red alga).